Reading from the N-terminus, the 474-residue chain is Transcription factor fscB (474 aa).

Disordered regions lie at residues 114–153 (VDELELSSDTRSSLSPSSHNTTTGHETGLSSVTPPQSYWT) and 207–242 (GKEVTKRNKRSRTEAQEASNSPCASSTADSQTNPAP). Residues 120-131 (SSDTRSSLSPSS) are compositionally biased toward low complexity. The span at 132-153 (HNTTTGHETGLSSVTPPQSYWT) shows a compositional bias: polar residues. Residues 207-221 (GKEVTKRNKRSRTEA) are compositionally biased toward basic and acidic residues. The segment covering 222–240 (QEASNSPCASSTADSQTNP) has biased composition (polar residues).

Belongs to the POU transcription factor family. Class-3 subfamily.

The protein localises to the nucleus. In terms of biological role, transcription factor; part of the fragmented gene cluster that mediates the biosynthesis of fusarochromene, a tryptophan-derived metabolite closely related to a group of mycotoxins including fusarochromanone. The polypeptide is Transcription factor fscB (Fusarium equiseti (Fusarium scirpi)).